The primary structure comprises 127 residues: Fluoride-specific ion channel FluC (127 aa).

2 consecutive transmembrane segments (helical) span residues W4–W24 and G36–A56. Positions 75 and 78 each coordinate Na(+). The chain crosses the membrane as a helical span at residues L100–V120.

Belongs to the fluoride channel Fluc/FEX (TC 1.A.43) family.

The protein localises to the cell inner membrane. It catalyses the reaction fluoride(in) = fluoride(out). Na(+) is not transported, but it plays an essential structural role and its presence is essential for fluoride channel function. Functionally, fluoride-specific ion channel. Important for reducing fluoride concentration in the cell, thus reducing its toxicity. This is Fluoride-specific ion channel FluC from Sorangium cellulosum (strain So ce56) (Polyangium cellulosum (strain So ce56)).